Consider the following 490-residue polypeptide: Probable glycine dehydrogenase (decarboxylating) subunit 2 (490 aa).

Position 273 is an N6-(pyridoxal phosphate)lysine (Lys-273).

The protein belongs to the GcvP family. C-terminal subunit subfamily. In terms of assembly, the glycine cleavage system is composed of four proteins: P, T, L and H. In this organism, the P 'protein' is a heterodimer of two subunits. Pyridoxal 5'-phosphate serves as cofactor.

The catalysed reaction is N(6)-[(R)-lipoyl]-L-lysyl-[glycine-cleavage complex H protein] + glycine + H(+) = N(6)-[(R)-S(8)-aminomethyldihydrolipoyl]-L-lysyl-[glycine-cleavage complex H protein] + CO2. Its function is as follows. The glycine cleavage system catalyzes the degradation of glycine. The P protein binds the alpha-amino group of glycine through its pyridoxal phosphate cofactor; CO(2) is released and the remaining methylamine moiety is then transferred to the lipoamide cofactor of the H protein. This chain is Probable glycine dehydrogenase (decarboxylating) subunit 2, found in Staphylococcus aureus (strain MRSA252).